A 278-amino-acid chain; its full sequence is Thioredoxin-related transmembrane protein 1 (278 aa).

An N-terminal signal peptide occupies residues 1 to 26 (MAHLGRLMVPLAALVLLLWAVPGAHG). Residues 27–132 (RRNNVRVLTD…FINFVSDKEW (106 aa)) enclose the Thioredoxin domain. At 27 to 181 (RRNNVRVLTD…DLGIPAWGSY (155 aa)) the chain is on the extracellular side. Active-site nucleophile residues include cysteine 56 and cysteine 59. Cysteine 56 and cysteine 59 are joined by a disulfide. The helical transmembrane segment at 182–202 (LVFAFATVLSGLLLGLCMIFV) threads the bilayer. The Cytoplasmic portion of the chain corresponds to 203-278 (ADCLCPSKRR…VGLPSATDTS (76 aa)). Residues cysteine 205 and cysteine 207 are each lipidated (S-palmitoyl cysteine). Over residues 217–226 (QYAKKTSPEF) the composition is skewed to polar residues. The disordered stretch occupies residues 217–278 (QYAKKTSPEF…VGLPSATDTS (62 aa)). Over residues 235–251 (EEQEADEEDVSEEEAED) the composition is skewed to acidic residues. 2 positions are modified to phosphoserine: serine 245 and serine 278.

In terms of assembly, interacts with ATP2A2. Post-translationally, palmitoylated; palmitoylation is required for localization to mitochondria-associated endoplasmic reticulum membrane (MAM).

It localises to the endoplasmic reticulum membrane. It is found in the mitochondrion membrane. The protein localises to the secreted. It carries out the reaction Catalyzes the rearrangement of -S-S- bonds in proteins.. Thiredoxin domain-containing protein that participates in various redox reactions through the reversible oxidation of its active center dithiol to a disulfide and catalyze dithiol-disulfide exchange reactions. Acts as a key inhibitor of the alternative triglyceride biosynthesis pathway by inhibiting the activity of TMEM68/DIESL at the endoplasmic reticulum, thereby restricting accumulation of triacylglycerol. The alternative triglyceride biosynthesis pathway mediates formation of triacylglycerol from diacylglycerol and membrane phospholipids. Acts as a protein disulfide isomerase by catalyzing formation or reduction of disulfide bonds. Specifically mediates formation of disulfide bonds of transmembrane proteins at the endoplasmic reticulum membrane. Involved in ER-associated degradation (ERAD) via its protein disulfide isomerase activity by acting on folding-defective polypeptides at the endoplasmic reticulum membrane. Acts as a negative regulator of platelet aggregation following secretion in the extracellular space. Acts as a regulator of endoplasmic reticulum-mitochondria contact sites via its ability to regulate redox signals. Regulates endoplasmic reticulum-mitochondria Ca(2+) flux. The protein is Thioredoxin-related transmembrane protein 1 of Mus musculus (Mouse).